The following is a 425-amino-acid chain: Enolase (425 aa).

Gln-163 lines the (2R)-2-phosphoglycerate pocket. Glu-205 (proton donor) is an active-site residue. Mg(2+) is bound by residues Asp-242, Glu-285, and Asp-312. Residues Lys-337, Arg-366, Ser-367, and Lys-388 each contribute to the (2R)-2-phosphoglycerate site. Lys-337 serves as the catalytic Proton acceptor.

It belongs to the enolase family. Requires Mg(2+) as cofactor.

The protein resides in the cytoplasm. It is found in the secreted. Its subcellular location is the cell surface. The enzyme catalyses (2R)-2-phosphoglycerate = phosphoenolpyruvate + H2O. It functions in the pathway carbohydrate degradation; glycolysis; pyruvate from D-glyceraldehyde 3-phosphate: step 4/5. Functionally, catalyzes the reversible conversion of 2-phosphoglycerate (2-PG) into phosphoenolpyruvate (PEP). It is essential for the degradation of carbohydrates via glycolysis. In Ruegeria pomeroyi (strain ATCC 700808 / DSM 15171 / DSS-3) (Silicibacter pomeroyi), this protein is Enolase.